Consider the following 292-residue polypeptide: NAD kinase (292 aa).

Catalysis depends on aspartate 73, which acts as the Proton acceptor. Residues aspartate 73 to glycine 74, asparagine 147 to glutamate 148, histidine 158, arginine 175, aspartate 177, threonine 188 to serine 193, and glutamine 247 contribute to the NAD(+) site.

Belongs to the NAD kinase family. The cofactor is a divalent metal cation.

Its subcellular location is the cytoplasm. The enzyme catalyses NAD(+) + ATP = ADP + NADP(+) + H(+). Involved in the regulation of the intracellular balance of NAD and NADP, and is a key enzyme in the biosynthesis of NADP. Catalyzes specifically the phosphorylation on 2'-hydroxyl of the adenosine moiety of NAD to yield NADP. This Shigella dysenteriae serotype 1 (strain Sd197) protein is NAD kinase.